The sequence spans 212 residues: Peptide methionine sulfoxide reductase MsrA (212 aa).

Cysteine 52 is an active-site residue.

Belongs to the MsrA Met sulfoxide reductase family.

The enzyme catalyses L-methionyl-[protein] + [thioredoxin]-disulfide + H2O = L-methionyl-(S)-S-oxide-[protein] + [thioredoxin]-dithiol. It carries out the reaction [thioredoxin]-disulfide + L-methionine + H2O = L-methionine (S)-S-oxide + [thioredoxin]-dithiol. In terms of biological role, has an important function as a repair enzyme for proteins that have been inactivated by oxidation. Catalyzes the reversible oxidation-reduction of methionine sulfoxide in proteins to methionine. This is Peptide methionine sulfoxide reductase MsrA from Escherichia coli (strain SMS-3-5 / SECEC).